The chain runs to 438 residues: Dihydrolipoyllysine-residue acetyltransferase component of pyruvate dehydrogenase complex (438 aa).

The 76-residue stretch at methionine 1–glutamate 76 folds into the Lipoyl-binding domain. At lysine 42 the chain carries N6-lipoyllysine. The region spanning lysine 132–glutamine 169 is the Peripheral subunit-binding (PSBD) domain. Residues serine 172 to serine 181 are compositionally biased toward polar residues. The segment at serine 172–histidine 192 is disordered. Histidine 411 is a catalytic residue.

This sequence belongs to the 2-oxoacid dehydrogenase family. As to quaternary structure, forms a 24-polypeptide structural core with octahedral symmetry. (R)-lipoate serves as cofactor.

It carries out the reaction N(6)-[(R)-dihydrolipoyl]-L-lysyl-[protein] + acetyl-CoA = N(6)-[(R)-S(8)-acetyldihydrolipoyl]-L-lysyl-[protein] + CoA. Its function is as follows. The pyruvate dehydrogenase complex catalyzes the overall conversion of pyruvate to acetyl-CoA and CO(2). It contains multiple copies of three enzymatic components: pyruvate dehydrogenase (E1), dihydrolipoamide acetyltransferase (E2) and lipoamide dehydrogenase (E3). The protein is Dihydrolipoyllysine-residue acetyltransferase component of pyruvate dehydrogenase complex (pdhC) of Mycoplasma capricolum subsp. capricolum (strain California kid / ATCC 27343 / NCTC 10154).